The following is a 401-amino-acid chain: Homoserine O-acetyltransferase (401 aa).

The 322-residue stretch at N37–P358 folds into the AB hydrolase-1 domain. S146 serves as the catalytic Nucleophile. Residue R215 participates in substrate binding. Active-site residues include D318 and H351. D352 serves as a coordination point for substrate.

This sequence belongs to the AB hydrolase superfamily. MetX family. In terms of assembly, homodimer.

The protein localises to the cytoplasm. It catalyses the reaction L-homoserine + acetyl-CoA = O-acetyl-L-homoserine + CoA. It functions in the pathway amino-acid biosynthesis; L-methionine biosynthesis via de novo pathway; O-acetyl-L-homoserine from L-homoserine: step 1/1. Functionally, transfers an acetyl group from acetyl-CoA to L-homoserine, forming acetyl-L-homoserine. In Natronomonas pharaonis (strain ATCC 35678 / DSM 2160 / CIP 103997 / JCM 8858 / NBRC 14720 / NCIMB 2260 / Gabara) (Halobacterium pharaonis), this protein is Homoserine O-acetyltransferase.